Reading from the N-terminus, the 858-residue chain is DNA mismatch repair protein MutS (858 aa).

An ATP-binding site is contributed by 600 to 607; that stretch reads GPNMSGKS. The interval 803–823 is disordered; sequence EAASDEVDDNNSENSPMTDAE.

The protein belongs to the DNA mismatch repair MutS family.

Functionally, this protein is involved in the repair of mismatches in DNA. It is possible that it carries out the mismatch recognition step. This protein has a weak ATPase activity. The protein is DNA mismatch repair protein MutS of Lactobacillus helveticus (strain DPC 4571).